Consider the following 363-residue polypeptide: L-arabinitol 4-dehydrogenase (363 aa).

Zn(2+) contacts are provided by Cys53, His78, Glu79, Cys108, Cys111, Cys114, Cys122, and Glu163. NAD(+) contacts are provided by residues 190 to 191 (PI), Asp211, Arg216, Ile282, and 306 to 308 (QYR).

It belongs to the zinc-containing alcohol dehydrogenase family. As to quaternary structure, homotetramer. It depends on Zn(2+) as a cofactor.

It carries out the reaction L-arabinitol + NAD(+) = L-xylulose + NADH + H(+). Its pathway is carbohydrate degradation; L-arabinose degradation via L-arabinitol; D-xylulose 5-phosphate from L-arabinose (fungal route): step 2/5. Its function is as follows. Catalyzes the NAD-dependent oxidation of L-arabinitol to L-xylulose in the fungal L-arabinose catabolic pathway. L-arabinose catabolism is important for using plant material as a carbon source. Not active on D-arabinitol, D-sorbitol and D-mannitol. The chain is L-arabinitol 4-dehydrogenase (ard-1) from Neurospora crassa (strain ATCC 24698 / 74-OR23-1A / CBS 708.71 / DSM 1257 / FGSC 987).